Reading from the N-terminus, the 471-residue chain is Glutamate--tRNA ligase (471 aa).

Positions 9–19 match the 'HIGH' region motif; that stretch reads PSPTGYLHVGG. Cys-98, Cys-100, Cys-125, and Asp-127 together coordinate Zn(2+). The 'KMSKS' region motif lies at 237-241; the sequence is KLSKR. Lys-240 contributes to the ATP binding site.

Belongs to the class-I aminoacyl-tRNA synthetase family. Glutamate--tRNA ligase type 1 subfamily. Monomer. Requires Zn(2+) as cofactor.

It is found in the cytoplasm. The catalysed reaction is tRNA(Glu) + L-glutamate + ATP = L-glutamyl-tRNA(Glu) + AMP + diphosphate. In terms of biological role, catalyzes the attachment of glutamate to tRNA(Glu) in a two-step reaction: glutamate is first activated by ATP to form Glu-AMP and then transferred to the acceptor end of tRNA(Glu). The polypeptide is Glutamate--tRNA ligase (Yersinia pestis).